Here is a 1177-residue protein sequence, read N- to C-terminus: DNA-directed RNA polymerase subunit beta (1177 aa).

Residues 1147 to 1161 (DDTEIEMRDTEDDDD) are compositionally biased toward acidic residues. Residues 1147–1177 (DDTEIEMRDTEDDDDHQSADKLNVEVETTKE) form a disordered region. Positions 1162 to 1177 (HQSADKLNVEVETTKE) are enriched in basic and acidic residues.

Belongs to the RNA polymerase beta chain family. In terms of assembly, the RNAP catalytic core consists of 2 alpha, 1 beta, 1 beta' and 1 omega subunit. When a sigma factor is associated with the core the holoenzyme is formed, which can initiate transcription.

It carries out the reaction RNA(n) + a ribonucleoside 5'-triphosphate = RNA(n+1) + diphosphate. Its function is as follows. DNA-dependent RNA polymerase catalyzes the transcription of DNA into RNA using the four ribonucleoside triphosphates as substrates. In Bacillus anthracis (strain A0248), this protein is DNA-directed RNA polymerase subunit beta.